Here is a 417-residue protein sequence, read N- to C-terminus: uncharacterized protein (417 aa).

A helical membrane pass occupies residues 10–30; that stretch reads ALVCFSILSILVLACGCVNTP. Residues 84 to 106 are disordered; the sequence is QENHPLQSNQNYEQTNGNFNEEN. Over residues 86-106 the composition is skewed to polar residues; the sequence is NHPLQSNQNYEQTNGNFNEEN. A helical transmembrane segment spans residues 148–168; the sequence is LYYIKVIDPIVGGLAGIDIYV.

It is found in the cell membrane. This is an uncharacterized protein from Methanocaldococcus jannaschii (strain ATCC 43067 / DSM 2661 / JAL-1 / JCM 10045 / NBRC 100440) (Methanococcus jannaschii).